We begin with the raw amino-acid sequence, 127 residues long: Aspartate 1-decarboxylase (127 aa).

Catalysis depends on Ser25, which acts as the Schiff-base intermediate with substrate; via pyruvic acid. Ser25 carries the pyruvic acid (Ser) modification. Residue Thr57 coordinates substrate. The active-site Proton donor is the Tyr58. 73–75 (GAA) lines the substrate pocket.

Belongs to the PanD family. As to quaternary structure, heterooctamer of four alpha and four beta subunits. The cofactor is pyruvate. In terms of processing, is synthesized initially as an inactive proenzyme, which is activated by self-cleavage at a specific serine bond to produce a beta-subunit with a hydroxyl group at its C-terminus and an alpha-subunit with a pyruvoyl group at its N-terminus.

It localises to the cytoplasm. The enzyme catalyses L-aspartate + H(+) = beta-alanine + CO2. It functions in the pathway cofactor biosynthesis; (R)-pantothenate biosynthesis; beta-alanine from L-aspartate: step 1/1. In terms of biological role, catalyzes the pyruvoyl-dependent decarboxylation of aspartate to produce beta-alanine. This chain is Aspartate 1-decarboxylase, found in Bacillus cytotoxicus (strain DSM 22905 / CIP 110041 / 391-98 / NVH 391-98).